We begin with the raw amino-acid sequence, 189 residues long: Nucleoside triphosphate pyrophosphatase (189 aa).

Residue aspartate 70 is the Proton acceptor of the active site.

It belongs to the Maf family. Requires a divalent metal cation as cofactor.

Its subcellular location is the cytoplasm. It carries out the reaction a ribonucleoside 5'-triphosphate + H2O = a ribonucleoside 5'-phosphate + diphosphate + H(+). The catalysed reaction is a 2'-deoxyribonucleoside 5'-triphosphate + H2O = a 2'-deoxyribonucleoside 5'-phosphate + diphosphate + H(+). In terms of biological role, nucleoside triphosphate pyrophosphatase. May have a dual role in cell division arrest and in preventing the incorporation of modified nucleotides into cellular nucleic acids. The sequence is that of Nucleoside triphosphate pyrophosphatase from Xylella fastidiosa (strain 9a5c).